The sequence spans 91 residues: Early E3B 10.4 kDa protein (91 aa).

The signal sequence occupies residues 1–22; that stretch reads MIPRVLILLTLVALFCACSTLA. The Lumenal segment spans residues 23 to 34; the sequence is AVAHIEVDCIPP. Residues 35-60 form a helical membrane-spanning segment; the sequence is FTVYLLYGFVTLILICSLVTVVIAFI. Residues 61-91 lie on the Cytoplasmic side of the membrane; the sequence is QFIDWICVRIAYLRHHPQYRDRTIADLLRIL.

It belongs to the adenoviridae E3B family.

Its subcellular location is the host endoplasmic reticulum membrane. Down-regulates the EGF receptor. The sequence is that of Early E3B 10.4 kDa protein from Homo sapiens (Human).